We begin with the raw amino-acid sequence, 170 residues long: Acireductone dioxygenase (170 aa).

Residues His-99, His-101, Glu-105, and His-144 each coordinate Fe(2+). Ni(2+) contacts are provided by His-99, His-101, Glu-105, and His-144.

It belongs to the acireductone dioxygenase (ARD) family. As to quaternary structure, monomer. The cofactor is Fe(2+). Requires Ni(2+) as cofactor.

The catalysed reaction is 1,2-dihydroxy-5-(methylsulfanyl)pent-1-en-3-one + O2 = 3-(methylsulfanyl)propanoate + CO + formate + 2 H(+). The enzyme catalyses 1,2-dihydroxy-5-(methylsulfanyl)pent-1-en-3-one + O2 = 4-methylsulfanyl-2-oxobutanoate + formate + 2 H(+). It participates in amino-acid biosynthesis; L-methionine biosynthesis via salvage pathway; L-methionine from S-methyl-5-thio-alpha-D-ribose 1-phosphate: step 5/6. Catalyzes 2 different reactions between oxygen and the acireductone 1,2-dihydroxy-3-keto-5-methylthiopentene (DHK-MTPene) depending upon the metal bound in the active site. Fe-containing acireductone dioxygenase (Fe-ARD) produces formate and 2-keto-4-methylthiobutyrate (KMTB), the alpha-ketoacid precursor of methionine in the methionine recycle pathway. Ni-containing acireductone dioxygenase (Ni-ARD) produces methylthiopropionate, carbon monoxide and formate, and does not lie on the methionine recycle pathway. The sequence is that of Acireductone dioxygenase from Bacillus anthracis.